Consider the following 987-residue polypeptide: Voltage-gated delayed rectifier potassium channel KCNH1 (987 aa).

Over 1-220 the chain is Cytoplasmic; sequence MTMAGGRKGL…LHYCVFKTTW (220 aa). Positions 14–94 constitute a PAS domain; sequence QNTFLENIVR…QTFENYEMNS (81 aa). A PAC domain is found at 93–145; the sequence is NSFEILMYKKNRTPVWFFVKIAPIRNEQDKVVLFLCTFSDITAFKQPIEDDSC. A required for phosphatidylinositol bisphosphate binding region spans residues 151-162; sequence FARLTRALTSSR. A helical membrane pass occupies residues 221 to 241; sequence DWIILILTFYTAILVPYNVSF. The Extracellular portion of the chain corresponds to 242-248; that stretch reads KTRQNNV. A helical membrane pass occupies residues 249–269; the sequence is AWLVVDSIVDVIFLVDIVLNF. Residues 270-290 are Cytoplasmic-facing; the sequence is HTTFVGPAGEVISDPKLIRMN. The helical transmembrane segment at 291–309 threads the bilayer; sequence YLKTWFVIDLLSCLPYDVI. Topologically, residues 310 to 345 are extracellular; the sequence is NAFENVDEVSAFMGDPGKIGFADQIPPPLEGRESQG. A helical; Voltage-sensor membrane pass occupies residues 346–368; the sequence is ISSLFSSLKVVRLLRLGRVARKL. Residues 369 to 377 are Cytoplasmic-facing; it reads DHYIEYGAA. The helical transmembrane segment at 378-399 threads the bilayer; sequence VLVLLVCVFGLAAHWMACIWYS. Residues 400-448 are Extracellular-facing; that stretch reads IGDYEIFDEDTKTIRNNSWLYQLAMDIGTPYQFNGSGSGKWEGGPSKNS. N-linked (GlcNAc...) asparagine glycosylation is found at N415 and N433. The pore-forming intramembrane region spans 449 to 470; that stretch reads VYISSLYFTMTSLTSVGFGNIA. The short motif at 463 to 468 is the Selectivity filter element; the sequence is SVGFGN. At 471–477 the chain is on the extracellular side; it reads PSTDIEK. Residues 478 to 498 traverse the membrane as a helical segment; sequence IFAVAIMMIGSLLYATIFGNV. At 499–987 the chain is on the cytoplasmic side; the sequence is TTIFQQMYAN…ESERDIFGAS (489 aa). Positions 673-770 are calmodulin-binding; that stretch reads KRDALQKVLE…LDDLDVEKGS (98 aa). Positions 699–701 are interaction with cyclic nucleotide-binding pocket; sequence YNL. A CAD (involved in subunit assembly) region spans residues 922 to 962; the sequence is AAVLEVKHELKEDIKALSTKMTSIEKQLSEILRILTSRRSS. The disordered stretch occupies residues 960 to 987; that stretch reads RSSQSPQELFEISRPQSPESERDIFGAS. A phosphoserine mark is found at S972, S976, and S979. A compositionally biased stretch (basic and acidic residues) spans 978–987; the sequence is ESERDIFGAS.

Belongs to the potassium channel family. H (Eag) (TC 1.A.1.20) subfamily. Kv10.1/KCNH1 sub-subfamily. Homomultimer. The potassium channel is composed of a homo- or heterotetrameric complex of pore-forming alpha subunits that can associate with modulating beta subunits. Heteromultimer with KCNH5/EAG2. Interacts with ALG10B. Interacts with RABEP1. Interacts (via C-terminus) with CTTN. Interacts (via C-terminal cytoplasmic region) with Ca(2+)-bound calmodulin. Post-translationally, channel activity is regulated via tyrosine phosphorylation/dephosphorylation by SRC and PTPN6. In terms of tissue distribution, detected in cerebellum, cortex and retina.

The protein resides in the cell membrane. Its subcellular location is the nucleus inner membrane. It localises to the cell projection. It is found in the dendrite. The protein localises to the axon. The protein resides in the presynaptic cell membrane. Its subcellular location is the perikaryon. It localises to the postsynaptic density membrane. It is found in the early endosome membrane. It carries out the reaction K(+)(in) = K(+)(out). Its activity is regulated as follows. Channel activity is inhibited by interaction with Ca(2+)-bound calmodulin. Interaction of a single pore-forming alpha subunit with a calmodulin chain is sufficient to promote channel closure. Extracellular magnesium ion concentrations up to 4 mM modulate channel activity by slowing down current activation in a reversible fashion. Channel activity is not regulated by cyclic nucleotides. Channel activity is inhibited by binding intracellular phosphatidylinositol-3,5-bisphosphate and phosphatidylinositol-4,5-bisphosphate (PIP2), but is not inhibited by phosphatidylinositol 4-phosphate. In terms of biological role, pore-forming (alpha) subunit of a voltage-gated delayed rectifier potassium channel that mediates outward-rectifying potassium currents which, on depolarization, reaches a steady-state level and do not inactivate. The activation kinetics depend on the prepulse potential and external divalent cation concentration. With negative prepulses, the current activation is delayed and slowed down several fold, whereas more positive prepulses speed up activation. The time course of activation is biphasic with a fast and a slowly activating current component. Activates at more positive membrane potentials and exhibit a steeper activation curve. Channel properties are modulated by subunit assembly. Mediates IK(NI) current in myoblasts. Involved in the regulation of cell proliferation and differentiation, in particular adipogenic and osteogenic differentiation in bone marrow-derived mesenchymal stem cells (MSCs). In Bos taurus (Bovine), this protein is Voltage-gated delayed rectifier potassium channel KCNH1.